A 195-amino-acid chain; its full sequence is Thymidine kinase (195 aa).

Residues 9 to 16 (STMNAGKS) and 87 to 90 (DEAQ) each bind ATP. Glu88 functions as the Proton acceptor in the catalytic mechanism. Zn(2+) is bound by residues Cys145, Cys147, Cys182, and His185.

This sequence belongs to the thymidine kinase family. In terms of assembly, homotetramer.

Its subcellular location is the cytoplasm. It catalyses the reaction thymidine + ATP = dTMP + ADP + H(+). The polypeptide is Thymidine kinase (Jannaschia sp. (strain CCS1)).